A 553-amino-acid chain; its full sequence is Copine-9 (553 aa).

C2 domains lie at 1-125 and 132-255; these read MSLS…ERPL and KCGT…FTVY. The Ca(2+) site is built by Asp-163, Asp-169, Asp-225, Asp-227, and Asp-233. Residues 299–500 form the VWFA domain; that stretch reads NFTVAIDFTA…VQFVPFRDYV (202 aa). Positions 531 to 553 are disordered; it reads TRDIQPRPPPPVSPNPTPAPEQP. Residues 536–553 are compositionally biased toward pro residues; sequence PRPPPPVSPNPTPAPEQP.

It belongs to the copine family. The cofactor is Ca(2+).

In terms of biological role, probable calcium-dependent phospholipid-binding protein that may play a role in calcium-mediated intracellular processes. Plays a role in dendrite formation by melanocytes. The sequence is that of Copine-9 from Mus musculus (Mouse).